Consider the following 252-residue polypeptide: 5'-methylthioadenosine/S-adenosylhomocysteine nucleosidase (252 aa).

The Proton acceptor role is filled by glutamate 20. Residues glycine 86, isoleucine 160, and 181–182 (ME) each bind substrate. Aspartate 205 (proton donor) is an active-site residue.

It belongs to the PNP/UDP phosphorylase family. MtnN subfamily. In terms of assembly, homodimer.

It carries out the reaction S-adenosyl-L-homocysteine + H2O = S-(5-deoxy-D-ribos-5-yl)-L-homocysteine + adenine. It catalyses the reaction S-methyl-5'-thioadenosine + H2O = 5-(methylsulfanyl)-D-ribose + adenine. The enzyme catalyses 5'-deoxyadenosine + H2O = 5-deoxy-D-ribose + adenine. The protein operates within amino-acid biosynthesis; L-methionine biosynthesis via salvage pathway; S-methyl-5-thio-alpha-D-ribose 1-phosphate from S-methyl-5'-thioadenosine (hydrolase route): step 1/2. In terms of biological role, catalyzes the irreversible cleavage of the glycosidic bond in both 5'-methylthioadenosine (MTA) and S-adenosylhomocysteine (SAH/AdoHcy) to adenine and the corresponding thioribose, 5'-methylthioribose and S-ribosylhomocysteine, respectively. Also cleaves 5'-deoxyadenosine, a toxic by-product of radical S-adenosylmethionine (SAM) enzymes, into 5-deoxyribose and adenine. Thus, is required for in vivo function of the radical SAM enzymes biotin synthase and lipoic acid synthase, that are inhibited by 5'-deoxyadenosine accumulation. In Buchnera aphidicola subsp. Baizongia pistaciae (strain Bp), this protein is 5'-methylthioadenosine/S-adenosylhomocysteine nucleosidase.